The chain runs to 273 residues: MSNLQDIVVKEMKVKPSVESKSETRHIIQFIKNYVQSHSFIKSLTLGISGGQDSTLAGKLCQLAVNELKEDGNDCEFIAVKLPYGEQKDAAEVEDALTYIQPDKIITVNIKPAVDQSIQSLKEAGVNLTDFQKGNEKARERMKVQFSIASKQKGIVVGTDHSAENVTGFYTKYGDGAADIAPLFGLNKRQGKQLLAYLAAPKHLYEKTPTADLEDDKPQLPDEEALGVSYDDIDDYLEGKSVSSESKEIIENHYIKNAHKRELAYTRYTWPKN.

47–54 (GISGGQDS) is an ATP binding site. D53 serves as a coordination point for Mg(2+). Residue R139 coordinates deamido-NAD(+). Position 159 (T159) interacts with ATP. E164 is a binding site for Mg(2+). Deamido-NAD(+)-binding residues include K172 and D179. The ATP site is built by K188 and T210. 259–260 (HK) provides a ligand contact to deamido-NAD(+).

It belongs to the NAD synthetase family. In terms of assembly, homodimer.

The enzyme catalyses deamido-NAD(+) + NH4(+) + ATP = AMP + diphosphate + NAD(+) + H(+). Its pathway is cofactor biosynthesis; NAD(+) biosynthesis; NAD(+) from deamido-NAD(+) (ammonia route): step 1/1. In terms of biological role, catalyzes the ATP-dependent amidation of deamido-NAD to form NAD. Uses ammonia as a nitrogen source. In Staphylococcus saprophyticus subsp. saprophyticus (strain ATCC 15305 / DSM 20229 / NCIMB 8711 / NCTC 7292 / S-41), this protein is NH(3)-dependent NAD(+) synthetase.